Here is a 212-residue protein sequence, read N- to C-terminus: Small ribosomal subunit protein eS1 (212 aa).

It belongs to the eukaryotic ribosomal protein eS1 family.

The chain is Small ribosomal subunit protein eS1 from Staphylothermus marinus (strain ATCC 43588 / DSM 3639 / JCM 9404 / F1).